The following is a 580-amino-acid chain: MITRLSELFVRTLRDDPADAEVPSHKLLIRAGYVRPVAPGVYSWLPLGLRVLRKIENIVREEMNAIGGQEILLPALLPRAPYETTNRWTEYGDSLFRLKDRRDNDMMLGPTHEELFALTVKGEYSSYKDFPVILYQVQTKYRDEARPRAGILRGREFVMKDSYSFDTSDDGLKAAYHAHRDAYQRIFGRLGLDYVIVAATSGAMGGSASEEFLAESPTGEDTFVRCVESGYAANVEAVITPAPPARPIEGLAEAVVHETGDTPTIATLVDWANSAGLGRTVTAADTLKNILLKVRQPGGDWELLAVGVPGDREVDDKRLGAALEPAEYELLGDADFAKYPFLVRGYIGPKALLANGVRYLVDPRVVEGTSWITGADEPGKHVVDLVAGRDFTADGTIEAAEVRDGDPSPDGAGQLVSARGIEIGHIFQLGRKYTDAFTVDVLGENGKPVRLTQGSYGIGVSRLVAVVAEQQHDELGLRWPSAVSPFDVHVVIANKDDAARAGAEELAAELDRLGHEVLLDDRTASPGVKFKDAELLGVPWIVVIGRGWADGTIELRNRFTGETQPIAVTDAVASVTQAIG.

It belongs to the class-II aminoacyl-tRNA synthetase family. ProS type 1 subfamily. In terms of assembly, homodimer.

It is found in the cytoplasm. It catalyses the reaction tRNA(Pro) + L-proline + ATP = L-prolyl-tRNA(Pro) + AMP + diphosphate. Functionally, catalyzes the attachment of proline to tRNA(Pro) in a two-step reaction: proline is first activated by ATP to form Pro-AMP and then transferred to the acceptor end of tRNA(Pro). As ProRS can inadvertently accommodate and process non-cognate amino acids such as alanine and cysteine, to avoid such errors it has two additional distinct editing activities against alanine. One activity is designated as 'pretransfer' editing and involves the tRNA(Pro)-independent hydrolysis of activated Ala-AMP. The other activity is designated 'posttransfer' editing and involves deacylation of mischarged Ala-tRNA(Pro). The misacylated Cys-tRNA(Pro) is not edited by ProRS. This chain is Proline--tRNA ligase, found in Mycobacteroides abscessus (strain ATCC 19977 / DSM 44196 / CCUG 20993 / CIP 104536 / JCM 13569 / NCTC 13031 / TMC 1543 / L948) (Mycobacterium abscessus).